We begin with the raw amino-acid sequence, 325 residues long: Elongation factor Ts, mitochondrial (325 aa).

Residues Met-1–Ser-45 constitute a mitochondrion transit peptide. 3 positions are modified to N6-succinyllysine: Lys-76, Lys-133, and Lys-192. A Phosphoserine modification is found at Ser-270. A Phosphothreonine modification is found at Thr-324.

This sequence belongs to the EF-Ts family. Expressed in all tissues, with the highest levels of expression in skeletal muscle, liver and kidney.

Its subcellular location is the mitochondrion. Its function is as follows. Associates with the EF-Tu.GDP complex and induces the exchange of GDP to GTP. It remains bound to the aminoacyl-tRNA.EF-Tu.GTP complex up to the GTP hydrolysis stage on the ribosome. The chain is Elongation factor Ts, mitochondrial from Homo sapiens (Human).